A 635-amino-acid polypeptide reads, in one-letter code: Extracellular metalloproteinase 9 (635 aa).

A signal peptide spans 1 to 19 (MHGLLLAAGLLTLPLRALA). Residues 20 to 246 (HPGHQSTSIL…IHGVTDYVAD (227 aa)) constitute a propeptide that is removed on maturation. Asparagine 274 carries an N-linked (GlcNAc...) asparagine glycan. The tract at residues 279-307 (TWHSDGNTRYPTTRGNNGIAQDNPSGGTG) is disordered. Asparagine 413 carries an N-linked (GlcNAc...) asparagine glycan. A Zn(2+)-binding site is contributed by histidine 430. Residue glutamate 431 is part of the active site. Position 434 (histidine 434) interacts with Zn(2+). Asparagine 475 is a glycosylation site (N-linked (GlcNAc...) asparagine).

This sequence belongs to the peptidase M36 family. Requires Zn(2+) as cofactor.

The protein localises to the secreted. Secreted metalloproteinase that allows assimilation of proteinaceous substrates. The polypeptide is Extracellular metalloproteinase 9 (MEP9) (Uncinocarpus reesii (strain UAMH 1704)).